The sequence spans 195 residues: Large ribosomal subunit protein bL17 (195 aa).

The tract at residues A132 to S195 is disordered. A compositionally biased stretch (low complexity) spans P159–T186.

Belongs to the bacterial ribosomal protein bL17 family. Part of the 50S ribosomal subunit. Contacts protein L32.

The sequence is that of Large ribosomal subunit protein bL17 from Parafrankia sp. (strain EAN1pec).